We begin with the raw amino-acid sequence, 177 residues long: Peptide methionine sulfoxide reductase MsrA (177 aa).

The active site involves C15.

The protein belongs to the MsrA Met sulfoxide reductase family.

The enzyme catalyses L-methionyl-[protein] + [thioredoxin]-disulfide + H2O = L-methionyl-(S)-S-oxide-[protein] + [thioredoxin]-dithiol. It catalyses the reaction [thioredoxin]-disulfide + L-methionine + H2O = L-methionine (S)-S-oxide + [thioredoxin]-dithiol. In terms of biological role, has an important function as a repair enzyme for proteins that have been inactivated by oxidation. Catalyzes the reversible oxidation-reduction of methionine sulfoxide in proteins to methionine. In Listeria welshimeri serovar 6b (strain ATCC 35897 / DSM 20650 / CCUG 15529 / CIP 8149 / NCTC 11857 / SLCC 5334 / V8), this protein is Peptide methionine sulfoxide reductase MsrA.